The sequence spans 369 residues: Anhydro-N-acetylmuramic acid kinase (369 aa).

Glycine 12–aspartate 19 contributes to the ATP binding site.

Belongs to the anhydro-N-acetylmuramic acid kinase family.

The enzyme catalyses 1,6-anhydro-N-acetyl-beta-muramate + ATP + H2O = N-acetyl-D-muramate 6-phosphate + ADP + H(+). The protein operates within amino-sugar metabolism; 1,6-anhydro-N-acetylmuramate degradation. It participates in cell wall biogenesis; peptidoglycan recycling. Its function is as follows. Catalyzes the specific phosphorylation of 1,6-anhydro-N-acetylmuramic acid (anhMurNAc) with the simultaneous cleavage of the 1,6-anhydro ring, generating MurNAc-6-P. Is required for the utilization of anhMurNAc either imported from the medium or derived from its own cell wall murein, and thus plays a role in cell wall recycling. The chain is Anhydro-N-acetylmuramic acid kinase from Shigella flexneri.